The primary structure comprises 798 residues: Protocadherin beta-13 (798 aa).

Residues 1 to 28 form the signal peptide; the sequence is MEASGKLICRQRQVLFSFLLLGLSLAGA. The Extracellular portion of the chain corresponds to 29–690; sequence AEPRSYSVVE…AQADSLTVYL (662 aa). Cadherin domains are found at residues 36-134, 139-243, 248-348, 353-451, and 456-561; these read VVEE…SPVF, MLVK…APEF, YRVQ…APEV, FTSP…APAF, and YTLF…SPFV. Residues Asn-418 and Asn-436 are each glycosylated (N-linked (GlcNAc...) asparagine). Asn-567 is a glycosylation site (N-linked (GlcNAc...) asparagine). The Cadherin 6 domain occupies 568 to 671; it reads GSAPCTELVP…LVDGFSQPYL (104 aa). A helical transmembrane segment spans residues 691-711; that stretch reads VVALASVSSLFLFSVLLFVAV. The Cytoplasmic portion of the chain corresponds to 712–798; it reads RLCRRSRAAS…FPNNFGFNIQ (87 aa).

The protein resides in the cell membrane. Its function is as follows. Potential calcium-dependent cell-adhesion protein. May be involved in the establishment and maintenance of specific neuronal connections in the brain. The protein is Protocadherin beta-13 (PCDHB13) of Pan troglodytes (Chimpanzee).